We begin with the raw amino-acid sequence, 578 residues long: MKASRFFIGTLKEAPADAEIVSHKLMVRAGMIRRVAGGIYNYLPVGLRSIRKVEAIVREEMNRAGAIELLMPAVQPAELWQESGRWEQYGPELLRFKDRKQNEFVIGPTHEEVVTDIARNQIKSYRQMPVNFYQIQTKFRDEIRPRFGVMRGREFIMKDAYSFDKDHESLKESYKKMYDAYVRIFTRIGFEFRPVAADNGSIGGSGSHEFHVIADTGEDAIAYCPTSDFAANVEAAEALPLLASRAAPAEAMQKVATPGKAKCEAVAELMGIPLERTIKSIVLATDNEGAEPTIWLLMLRGDHDLNEIKTAKLPGLAGHRFATEAEIVEWFGTPPGYLGPIGTKKPVRVVADRTVANMSDFVVGANEVDYHIAGVNWGRDLPEPVVADIRNVKAGDPSPDGKGALDICRGIEVGHVFQLGTKYSDAMGATFIDESGKAQPMVMGCYGIGITRILGAAIEQNFDDKGIVWPEAIAPFEVVLCPMGYDRSDAVREAADKLYADLAAAGIDVILDDRGERPGVMFADWELIGVPHRLVIGERGLKDGKIEYQGRRDAEATLLPADSAAAAVAEKVRAALAR.

The protein belongs to the class-II aminoacyl-tRNA synthetase family. ProS type 1 subfamily. In terms of assembly, homodimer.

Its subcellular location is the cytoplasm. It catalyses the reaction tRNA(Pro) + L-proline + ATP = L-prolyl-tRNA(Pro) + AMP + diphosphate. Functionally, catalyzes the attachment of proline to tRNA(Pro) in a two-step reaction: proline is first activated by ATP to form Pro-AMP and then transferred to the acceptor end of tRNA(Pro). As ProRS can inadvertently accommodate and process non-cognate amino acids such as alanine and cysteine, to avoid such errors it has two additional distinct editing activities against alanine. One activity is designated as 'pretransfer' editing and involves the tRNA(Pro)-independent hydrolysis of activated Ala-AMP. The other activity is designated 'posttransfer' editing and involves deacylation of mischarged Ala-tRNA(Pro). The misacylated Cys-tRNA(Pro) is not edited by ProRS. In Burkholderia mallei (strain ATCC 23344), this protein is Proline--tRNA ligase.